A 1025-amino-acid polypeptide reads, in one-letter code: Rho GTPase-activating protein Graf (1025 aa).

Residues 271–388 enclose the PH domain; the sequence is IFTKRGYLFL…WISAMDGTEP (118 aa). The region spanning 402 to 589 is the Rho-GAP domain; it reads YHLDEAGFMF…ILIDNYERIF (188 aa). The tract at residues 824–866 is disordered; that stretch reads GSASGPQQHPPVQRGLHSYGQTKHYSPLMPTSTSSSNDSVCDS. Over residues 854-866 the composition is skewed to low complexity; the sequence is TSTSSSNDSVCDS. Positions 963–1023 constitute an SH3 domain; sequence TGTARVRTLY…PENYVEHLKP (61 aa).

As to quaternary structure, interacts with Egfr (when ubiquitinated). In the adult brain, expressed in the antennal lobe, the subesophageal ganglion and the alpha/beta neurons of the mushroom body.

It is found in the cytoplasm. The protein resides in the cytosol. Its subcellular location is the cytoplasmic vesicle. Its function is as follows. GTPase-activating protein for Rho family proteins. Essential component of the CLIC (clathrin-independent carrier)/GEEC (GPI-anchored protein-enriched early endocytic compartment) endocytic pathway. During hematopoiesis, inhibits Egfr-ras-MAPK signaling by promoting Spi-induced Egfr internalization through CLIC/GEEC endocytosis, thereby preventing plasmatocyte overproliferation. Essential for normal mushroom body (MB) development and consequently the formation of olfactory long-term memories. During MD development, required to stop the MB beta-lobe from crossing the brain midline, possibly acting via its role in the CLIC/GEEC endocytic pathway to down-regulate the Egfr-ras-MAPK signaling at the tip of the beta-lobes. Required during embryo cellularization for maintaining and regulating the rate of actomyosin ring constriction. During cellularization, inhibits Rho-GTP levels at the furrow canal tip in a spatiotemporal manner, thus delaying the onset of actomyosin contraction and ensuring appropriate closure of the cells at the base of nuclei after membrane extension. This Drosophila melanogaster (Fruit fly) protein is Rho GTPase-activating protein Graf.